We begin with the raw amino-acid sequence, 27 residues long: M-lycotoxin-Hc2a (27 aa).

As to expression, expressed by the venom gland.

Its subcellular location is the secreted. Forms pore that permeabilize the cell membrane. Promotes efflux of calcium from synaptosomes, causes hemolysis, and dissipates voltage gradients across muscle membrane. Potently inhibits the growth of bacteria, yeast and Leishmania. May function both in the prey capture strategy as well as protection from infectious organisms arising from prey ingestion. In Hogna carolinensis (Carolina wolf spider), this protein is M-lycotoxin-Hc2a.